The chain runs to 163 residues: NADH-quinone oxidoreductase subunit I (163 aa).

2 4Fe-4S ferredoxin-type domains span residues 53 to 83 (LRRY…IEAG) and 94 to 123 (VRYD…EGPN). Positions 63, 66, 69, 73, 103, 106, 109, and 113 each coordinate [4Fe-4S] cluster.

This sequence belongs to the complex I 23 kDa subunit family. NDH-1 is composed of 14 different subunits. Subunits NuoA, H, J, K, L, M, N constitute the membrane sector of the complex. The cofactor is [4Fe-4S] cluster.

The protein localises to the cell inner membrane. It catalyses the reaction a quinone + NADH + 5 H(+)(in) = a quinol + NAD(+) + 4 H(+)(out). Its function is as follows. NDH-1 shuttles electrons from NADH, via FMN and iron-sulfur (Fe-S) centers, to quinones in the respiratory chain. The immediate electron acceptor for the enzyme in this species is believed to be ubiquinone. Couples the redox reaction to proton translocation (for every two electrons transferred, four hydrogen ions are translocated across the cytoplasmic membrane), and thus conserves the redox energy in a proton gradient. This chain is NADH-quinone oxidoreductase subunit I, found in Brucella canis (strain ATCC 23365 / NCTC 10854 / RM-666).